The following is a 583-amino-acid chain: Sensor protein SrrB (583 aa).

Over 1-11 (MMSRLNSVVIK) the chain is Cytoplasmic. Residues 12 to 32 (LWLTIILIVTTVLILLSIALI) form a helical membrane-spanning segment. Residues 33-174 (TFMQYYFTQE…SIEDTNNAIT (142 aa)) are Extracellular-facing. A helical transmembrane segment spans residues 175–195 (IITIITAVIFLTITTVFAFFL). Topologically, residues 196–583 (SSRITKPLRR…TFIIKLPKPE (388 aa)) are cytoplasmic. Residues 197-249 (SRITKPLRRLRDQATRVSEGDYSYKPSVTTKDEIGQLSQAFNQMSTEIEEHVD) form the HAMP domain. One can recognise a Histidine kinase domain in the interval 366 to 583 (NVSHELRTPI…TFIIKLPKPE (218 aa)). His-369 is subject to Phosphohistidine; by autocatalysis.

Its subcellular location is the cell membrane. The enzyme catalyses ATP + protein L-histidine = ADP + protein N-phospho-L-histidine.. Member of the two-component regulatory system SrrA/SrrB, which is involved in the global regulation of staphylococcal virulence factors in response to environmental oxygen levels as well as biofilm formation. Also plays an essential role in host-derived nitric oxide resistance by regulating hmp/flavohemoglobin, an enzyme that detoxifies nitric oxide by converting it to nitrate. Functions as a sensor protein kinase which is autophosphorylated at a histidine residue and transfers its phosphate group to SrrA. In turn, SrrA binds to the upstream promoter regions of the target genes to positively and negatively regulate their expression. The polypeptide is Sensor protein SrrB (srrB) (Staphylococcus aureus (strain MW2)).